The primary structure comprises 134 residues: Putative pre-16S rRNA nuclease (134 aa).

This sequence belongs to the YqgF nuclease family.

It localises to the cytoplasm. In terms of biological role, could be a nuclease involved in processing of the 5'-end of pre-16S rRNA. This chain is Putative pre-16S rRNA nuclease, found in Helicobacter pylori (strain ATCC 700392 / 26695) (Campylobacter pylori).